Reading from the N-terminus, the 222-residue chain is Small ribosomal subunit protein uS3 (222 aa).

One can recognise a KH type-2 domain in the interval 39 to 107; that stretch reads IRKYIKTKFY…QININIAEIK (69 aa).

The protein belongs to the universal ribosomal protein uS3 family. As to quaternary structure, part of the 30S ribosomal subunit. Forms a tight complex with proteins S10 and S14.

In terms of biological role, binds the lower part of the 30S subunit head. Binds mRNA in the 70S ribosome, positioning it for translation. In Carboxydothermus hydrogenoformans (strain ATCC BAA-161 / DSM 6008 / Z-2901), this protein is Small ribosomal subunit protein uS3.